Consider the following 347-residue polypeptide: GMP reductase (347 aa).

Residue 108 to 131 (ADFEKTKQILAQSPALNFVCIDVA) participates in NADP(+) binding. K(+)-binding residues include Gly181 and Gly183. The active-site Thioimidate intermediate is Cys186. 216–239 (IVSDGGCTMPGDVAKAFGGGADFV) contributes to the NADP(+) binding site.

This sequence belongs to the IMPDH/GMPR family. GuaC type 1 subfamily. As to quaternary structure, homotetramer.

The catalysed reaction is IMP + NH4(+) + NADP(+) = GMP + NADPH + 2 H(+). Its function is as follows. Catalyzes the irreversible NADPH-dependent deamination of GMP to IMP. It functions in the conversion of nucleobase, nucleoside and nucleotide derivatives of G to A nucleotides, and in maintaining the intracellular balance of A and G nucleotides. The sequence is that of GMP reductase from Citrobacter koseri (strain ATCC BAA-895 / CDC 4225-83 / SGSC4696).